Here is an 818-residue protein sequence, read N- to C-terminus: LisH domain-containing protein ARMC9 (818 aa).

Residues 7–39 (HESELLGLVKEYLDFAEFEDTLKTFSKECKIKG) enclose the LisH domain. A coiled-coil region spans residues 204 to 230 (QSNKEILQQLHQQLVEAERRSVTYLKR). Ser-582 bears the Phosphoserine mark. 2 disordered regions span residues 642–755 (VQWS…TTRE) and 790–818 (SSCGPQQASRPGSTASSTRGLPSSQSHRK). A compositionally biased stretch (low complexity) spans 701–711 (STPESCVSSSS). The segment covering 792–818 (CGPQQASRPGSTASSTRGLPSSQSHRK) has biased composition (polar residues).

Interacts with TOGARAM1, CCDC66, CEP104, CSPP1 and CEP290. Interacts with NDUFAF2. In terms of tissue distribution, strongly expressed in most melanomas and melanocytes. Weakly expressed in the testis.

Its subcellular location is the cytoplasm. The protein resides in the cytoskeleton. It localises to the cilium basal body. The protein localises to the cell projection. It is found in the cilium. Its subcellular location is the microtubule organizing center. The protein resides in the centrosome. It localises to the centriole. Involved in ciliogenesis. It is required for appropriate acetylation and polyglutamylation of ciliary microtubules, and regulation of cilium length. Acts as a positive regulator of hedgehog (Hh)signaling. May participate in the trafficking and/or retention of GLI2 and GLI3 proteins at the ciliary tip. This is LisH domain-containing protein ARMC9 from Homo sapiens (Human).